The following is a 609-amino-acid chain: Protein KINESIN LIGHT CHAIN-RELATED 1 (609 aa).

The segment at M1 to P77 is disordered. Low complexity predominate over residues K38–S55. 10 TPR repeats span residues A140–T173, F183–T216, G225–H258, A267–G301, A307–S340, A349–P382, A392–K425, A433–A466, G474–E507, and L516–K549. Residues L582–F609 form a disordered region.

Belongs to the kinesin light chain family. In terms of assembly, interacts with IQD1.

It is found in the cytoplasm. It localises to the cytoskeleton. The polypeptide is Protein KINESIN LIGHT CHAIN-RELATED 1 (Arabidopsis thaliana (Mouse-ear cress)).